We begin with the raw amino-acid sequence, 396 residues long: Inositol-tetrakisphosphate 1-kinase (396 aa).

A 1D-myo-inositol 1,3,4-trisphosphate-binding site is contributed by K18. 2 residues coordinate ATP: R106 and K157. The region spanning 117–325 (ETYMQDERIC…ITTILQRPDQ (209 aa)) is the ATP-grasp domain. 1D-myo-inositol 1,3,4-trisphosphate is bound by residues H167 and K199. ATP-binding positions include 188 to 199 (QSFISHNAVLYK), S214, S232, and S236. Mg(2+) is bound by residues D281, D295, and N297. Residue N297 coordinates 1D-myo-inositol 1,3,4-trisphosphate.

The protein belongs to the ITPK1 family. As to quaternary structure, monomer. It depends on Mg(2+) as a cofactor.

The catalysed reaction is 1D-myo-inositol 3,4,5,6-tetrakisphosphate + ATP = 1D-myo-inositol 1,3,4,5,6-pentakisphosphate + ADP + H(+). The enzyme catalyses 1D-myo-inositol 1,3,4-trisphosphate + ATP = 1D-myo-inositol 1,3,4,5-tetrakisphosphate + ADP + H(+). It catalyses the reaction 1D-myo-inositol 1,3,4-trisphosphate + ATP = 1D-myo-inositol 1,3,4,6-tetrakisphosphate + ADP + H(+). It carries out the reaction 1D-myo-inositol 3,4,6-trisphosphate + ATP = 1D-myo-inositol 1,3,4,6-tetrakisphosphate + ADP + H(+). The catalysed reaction is 1D-myo-inositol 1,3,4-trisphosphate + 1D-myo-inositol 1,3,4,5,6-pentakisphosphate = 1D-myo-inositol 3,4,5,6-tetrakisphosphate + 1D-myo-inositol 1,3,4,6-tetrakisphosphate. The enzyme catalyses 1D-myo-inositol 1,3,4-trisphosphate + 1D-myo-inositol 1,3,4,5,6-pentakisphosphate = 1D-myo-inositol 3,4,5,6-tetrakisphosphate + 1D-myo-inositol 1,3,4,5-tetrakisphosphate. Functionally, kinase that can phosphorylate various inositol polyphosphate such as Ins(3,4,5,6)P4 or Ins(1,3,4)P3. Phosphorylates Ins(3,4,5,6)P4 at position 1 to form Ins(1,3,4,5,6)P5. This reaction is thought to have regulatory importance, since Ins(3,4,5,6)P4 is an inhibitor of plasma membrane Ca(2+)-activated Cl(-) channels, while Ins(1,3,4,5,6)P5 is not. Also phosphorylates Ins(1,3,4)P3 on O-5 and O-6 to form Ins(1,3,4,6)P4, an essential molecule in the hexakisphosphate (InsP6) pathway. Also acts as an inositol polyphosphate phosphatase that dephosphorylates Ins(1,3,4,5)P4 and Ins(1,3,4,6)P4 to Ins(1,3,4)P3, and Ins(1,3,4,5,6)P5 to Ins(3,4,5,6)P4. May also act as an isomerase that interconverts the inositol tetrakisphosphate isomers Ins(1,3,4,5)P4 and Ins(1,3,4,6)P4 in the presence of ADP and magnesium. Probably acts as the rate-limiting enzyme of the InsP6 pathway. Modifies TNF-alpha-induced apoptosis by interfering with the activation of TNFRSF1A-associated death domain. Plays an important role in MLKL-mediated necroptosis. Produces highly phosphorylated inositol phosphates such as inositolhexakisphosphate (InsP6) which bind to MLKL mediating the release of an N-terminal auto-inhibitory region leading to its activation. Essential for activated phospho-MLKL to oligomerize and localize to the cell membrane during necroptosis. The polypeptide is Inositol-tetrakisphosphate 1-kinase (itpk1) (Xenopus laevis (African clawed frog)).